We begin with the raw amino-acid sequence, 308 residues long: Putative acetyl-hydrolase LipR (308 aa).

An N-terminal signal peptide occupies residues 1–40; that stretch reads MNLRKNVIRSVLRGARPLFASRRLGIAGRRVLLATLTAGA. The short motif at 76–78 is the Involved in the stabilization of the negatively charged intermediate by the formation of the oxyanion hole element; sequence HGG. Active-site residues include Ser146, Asp239, and His269.

It belongs to the 'GDXG' lipolytic enzyme family.

Its function is as follows. Required for maintaining the appropriate mycolic acid composition and permeability of the envelope on its exposure to acidic pH. This is Putative acetyl-hydrolase LipR (lipR) from Mycobacterium tuberculosis (strain ATCC 25618 / H37Rv).